A 155-amino-acid chain; its full sequence is MIELGVSLCPFFLAALFEIRGGYLICLWLRNNMRAVFGPLGRLMLAVCGIIPTFQPSHFGRVYAAHGGIFIVFSLIWDLFVDKKIPDRYDHRGNNNVCGCFHYVLRLSLIGRYSVISFCNFQTPRQRISDFFLSRSIKHNFYLFFCNQTLGNYFV.

The next 3 helical transmembrane spans lie at 8-28 (LCPF…ICLW), 35-55 (AVFG…PTFQ), and 62-82 (VYAA…LFVD).

It belongs to the UPF0060 family.

It is found in the cell membrane. This Methanosarcina acetivorans (strain ATCC 35395 / DSM 2834 / JCM 12185 / C2A) protein is UPF0060 membrane protein MA_3936.